The chain runs to 205 residues: Bcl2-associated agonist of cell death (205 aa).

Residues 1-139 are disordered; the sequence is MGTPKQPSLA…PFRGRSRSAP (139 aa). Phosphoserine is present on Ser-67. Positions 85–98 are enriched in polar residues; the sequence is IVQQQPGQAANNSH. Ser-113 carries the post-translational modification Phosphoserine. Over residues 118 to 128 the composition is skewed to acidic residues; sequence TEEDEGMEEEL. Position 129 is a phosphoserine (Ser-129). Arg-132 and Arg-134 each carry asymmetric dimethylarginine; by PRMT1. The residue at position 135 (Ser-135) is a Phosphoserine. Position 137 is a phosphoserine; by PKA, PKB, PAK1, RPS6KA1, RPS6KB1 and PKC/PRKCQ (Ser-137). The BH3 signature appears at 148 to 162; the sequence is YGRELRRMSDEFEGS. A phosphoserine mark is found at Ser-156 and Ser-171. A disordered region spans residues 161–180; it reads GSFKGLPRPKSAGTATQMRQ.

This sequence belongs to the Bcl-2 family. Forms heterodimers with the anti-apoptotic proteins, Bcl-X(L), Bcl-2 and Bcl-W. Also binds protein S100A10. The Ser-113/Ser-137 phosphorylated form binds 14-3-3 proteins. Interacts with AKT1 and PIM3. Interacts with HIF3A (via C-terminus domain); the interaction reduces the binding between BAD and BAX. Interacts (via BH3 domain) with NOL3 (via CARD domain); preventing the association of BAD with BCL2. Interacts with GIMAP3/IAN4 and GIMAP5/IAN5. Phosphorylated at one or more of Ser-113, Ser-137, Ser-156 and Ser-171 in response to survival stimuli, which blocks its pro-apoptotic activity. Phosphorylation on Ser-137 or Ser-113 promotes heterodimerization with 14-3-3 proteins. This interaction then facilitates the phosphorylation at Ser-156, a site within the BH3 motif, leading to the release of Bcl-X(L) and the promotion of cell survival. Ser-137 is the major site of AKT/PKB phosphorylation, Ser-156 the major site of protein kinase A (CAPK) phosphorylation. Post-translationally, methylation at Arg-132 and Arg-134 by PRMT1 inhibits Akt-mediated phosphorylation at Ser-137. In terms of tissue distribution, expressed in all tissues tested, including brain, liver, spleen and heart. In the brain, restricted to epithelial cells of the choroid plexus. Isoform alpha is the more abundant form.

The protein localises to the mitochondrion outer membrane. The protein resides in the cytoplasm. Functionally, promotes cell death. Successfully competes for the binding to Bcl-X(L), Bcl-2 and Bcl-W, thereby affecting the level of heterodimerization of these proteins with BAX. Can reverse the death repressor activity of Bcl-X(L), but not that of Bcl-2. Appears to act as a link between growth factor receptor signaling and the apoptotic pathways. This is Bcl2-associated agonist of cell death (Bad) from Rattus norvegicus (Rat).